The sequence spans 124 residues: Seripauperin-17 (124 aa).

Residues 1 to 20 (MVKLTSIAAGVAAIAAGVAA) form the signal peptide.

The protein belongs to the SRP1/TIP1 family. Seripauperin subfamily.

The chain is Seripauperin-17 (PAU17) from Saccharomyces cerevisiae (strain ATCC 204508 / S288c) (Baker's yeast).